The chain runs to 272 residues: Phosphoribosylformylglycinamidine synthase subunit PurQ (272 aa).

The region spanning 8 to 272 (VLVMSGYGIN…FKNAVEYFNK (265 aa)) is the Glutamine amidotransferase type-1 domain. Cysteine 98 functions as the Nucleophile in the catalytic mechanism. Catalysis depends on residues histidine 225, glutamate 227, and glutamate 235.

As to quaternary structure, part of the FGAM synthase complex composed of 1 PurL, 1 PurQ and 2 PurS subunits.

It localises to the cytoplasm. The catalysed reaction is N(2)-formyl-N(1)-(5-phospho-beta-D-ribosyl)glycinamide + L-glutamine + ATP + H2O = 2-formamido-N(1)-(5-O-phospho-beta-D-ribosyl)acetamidine + L-glutamate + ADP + phosphate + H(+). It carries out the reaction L-glutamine + H2O = L-glutamate + NH4(+). The protein operates within purine metabolism; IMP biosynthesis via de novo pathway; 5-amino-1-(5-phospho-D-ribosyl)imidazole from N(2)-formyl-N(1)-(5-phospho-D-ribosyl)glycinamide: step 1/2. Part of the phosphoribosylformylglycinamidine synthase complex involved in the purines biosynthetic pathway. Catalyzes the ATP-dependent conversion of formylglycinamide ribonucleotide (FGAR) and glutamine to yield formylglycinamidine ribonucleotide (FGAM) and glutamate. The FGAM synthase complex is composed of three subunits. PurQ produces an ammonia molecule by converting glutamine to glutamate. PurL transfers the ammonia molecule to FGAR to form FGAM in an ATP-dependent manner. PurS interacts with PurQ and PurL and is thought to assist in the transfer of the ammonia molecule from PurQ to PurL. This is Phosphoribosylformylglycinamidine synthase subunit PurQ from Methanococcus maripaludis (strain DSM 14266 / JCM 13030 / NBRC 101832 / S2 / LL).